Reading from the N-terminus, the 286-residue chain is Glycine--tRNA ligase alpha subunit (286 aa).

Belongs to the class-II aminoacyl-tRNA synthetase family. Tetramer of two alpha and two beta subunits.

Its subcellular location is the cytoplasm. It catalyses the reaction tRNA(Gly) + glycine + ATP = glycyl-tRNA(Gly) + AMP + diphosphate. The protein is Glycine--tRNA ligase alpha subunit of Thermotoga petrophila (strain ATCC BAA-488 / DSM 13995 / JCM 10881 / RKU-1).